Reading from the N-terminus, the 699-residue chain is Chitinase A1 (699 aa).

Positions 1 to 41 (MINLNKHTAFKKTAKFFLGLSLLLSVIVPSFALQPATAEAA) are cleaved as a signal peptide. Residues 44–454 (YKIVGYYPSW…NKLKADLPTG (411 aa)) form the GH18 domain. Residues 135-136 (DQ) and 162-165 (GGWT) each bind chitin. Residue glutamate 204 is the Proton donor of the active site. Residues tyrosine 205, 277–280 (MTYD), and tryptophan 433 each bind chitin. Residues 449-471 (ADLPTGGTVPPVDTTAPSVPGNA) form a disordered region. A compositionally biased stretch (low complexity) spans 452–465 (PTGGTVPPVDTTAP). 2 consecutive Fibronectin type-III domains span residues 467–553 (VPGN…TAQP) and 562–647 (APTN…TAAE).

It belongs to the glycosyl hydrolase 18 family. Chitinase class II subfamily.

It catalyses the reaction Random endo-hydrolysis of N-acetyl-beta-D-glucosaminide (1-&gt;4)-beta-linkages in chitin and chitodextrins.. The polypeptide is Chitinase A1 (chiA1) (Niallia circulans (Bacillus circulans)).